We begin with the raw amino-acid sequence, 209 residues long: Probable GTP-binding protein EngB (209 aa).

Residues 22 to 198 form the EngB-type G domain; sequence TPLEIAFVGR…NRTVGSWFDA (177 aa). Ser-37 and Thr-59 together coordinate Mg(2+).

Belongs to the TRAFAC class TrmE-Era-EngA-EngB-Septin-like GTPase superfamily. EngB GTPase family. It depends on Mg(2+) as a cofactor.

Its function is as follows. Necessary for normal cell division and for the maintenance of normal septation. In Neisseria meningitidis serogroup C (strain 053442), this protein is Probable GTP-binding protein EngB.